We begin with the raw amino-acid sequence, 190 residues long: Selenoprotein S (190 aa).

A helical membrane pass occupies residues 28–48; the sequence is SLLASYGWYILFSCVLLYIVI. The VCP/p97-interacting motif (VIM) stretch occupies residues 78–90; sequence RQEALAAARLRMQ. The interval 96–190 is disordered; sequence QVEKHKEKQR…RRGPSSGGUS (95 aa). Positions 97–118 are enriched in basic and acidic residues; the sequence is VEKHKEKQRQLEEEKRRQKIEM. Gly residues predominate over residues 160–174; that stretch reads RGGGYNPLTGEGGGT. Residue Sec-189 is a non-standard amino acid, selenocysteine.

It belongs to the selenoprotein S family. Interacts with DERL1 and (via VIM motif) with VCP, suggesting that it forms a membrane complex with DERL1 that serves as a receptor for VCP. Also interacts with DERL2, DERL3 and SELENOK. The SELENOK-SELENOS complex interacts with VCP. Interacts with CCDC47. Post-translationally, truncated SELENOS proteins produced by failed UGA/Sec decoding are ubiquitinated by the CRL2(KLHDC2) and CRL2(KLHDC3) complexes, which recognizes the glycine (Gly) at the C-terminus of truncated SELENOS proteins. Truncated SELENOS proteins produced by failed UGA/Sec decoding are also ubiquitinated by the CRL5(KLHDC1) complex.

It localises to the endoplasmic reticulum membrane. Its subcellular location is the cytoplasm. Functionally, involved in the degradation process of misfolded endoplasmic reticulum (ER) luminal proteins. Participates in the transfer of misfolded proteins from the ER to the cytosol, where they are destroyed by the proteasome in a ubiquitin-dependent manner. Probably acts by serving as a linker between DERL1, which mediates the retrotranslocation of misfolded proteins into the cytosol, and the ATPase complex VCP, which mediates the translocation and ubiquitination. This is Selenoprotein S from Rattus norvegicus (Rat).